The primary structure comprises 323 residues: Viral cathepsin (323 aa).

An N-terminal signal peptide occupies residues 1–18 (MSKFLLYWFVYGVVCSAA). The propeptide at 19 to 112 (YDILKAPNYF…VVLDRPPGKG (94 aa)) is activation peptide. Intrachain disulfides connect C133/C174, C167/C207, and C262/C310. Residue C136 is part of the active site. N158 is a glycosylation site (N-linked (GlcNAc...) asparagine; by host). Residues H269 and N289 contribute to the active site.

Belongs to the peptidase C1 family. In terms of processing, synthesized as an inactive proenzyme and activated by proteolytic removal of the inhibitory propeptide.

It carries out the reaction Endopeptidase of broad specificity, hydrolyzing substrates of both cathepsin L and cathepsin B.. In terms of biological role, cysteine protease that plays an essential role in host liquefaction to facilitate horizontal transmission of the virus. May participate in the degradation of foreign protein expressed by the baculovirus system. In Lepidoptera (butterflies and moths), this protein is Viral cathepsin (VCATH).